The sequence spans 173 residues: Bifunctional protein PyrR (173 aa).

The PRPP-binding motif lies at 93-105 (VILVDDVLYTGRT).

The protein belongs to the purine/pyrimidine phosphoribosyltransferase family. PyrR subfamily. In terms of assembly, homodimer and homohexamer; in equilibrium.

The enzyme catalyses UMP + diphosphate = 5-phospho-alpha-D-ribose 1-diphosphate + uracil. Functionally, regulates transcriptional attenuation of the pyrimidine nucleotide (pyr) operon by binding in a uridine-dependent manner to specific sites on pyr mRNA. This disrupts an antiterminator hairpin in the RNA and favors formation of a downstream transcription terminator, leading to a reduced expression of downstream genes. Its function is as follows. Also displays a weak uracil phosphoribosyltransferase activity which is not physiologically significant. The polypeptide is Bifunctional protein PyrR (Streptococcus thermophilus (strain CNRZ 1066)).